A 213-amino-acid chain; its full sequence is Cell division protein SepF 2 (213 aa).

Positions 16–63 (EDDGYDGRGFDPDDDFEPELDPEPERDRRRHEPPHQSHQALHPQRDES) are disordered. Residues 27-39 (PDDDFEPELDPEP) are compositionally biased toward acidic residues.

The protein belongs to the SepF family. Homodimer. Interacts with FtsZ.

It is found in the cytoplasm. Functionally, cell division protein that is part of the divisome complex and is recruited early to the Z-ring. Probably stimulates Z-ring formation, perhaps through the cross-linking of FtsZ protofilaments. Its function overlaps with FtsA. The chain is Cell division protein SepF 2 from Streptomyces avermitilis (strain ATCC 31267 / DSM 46492 / JCM 5070 / NBRC 14893 / NCIMB 12804 / NRRL 8165 / MA-4680).